Reading from the N-terminus, the 602-residue chain is Replication protein E1 (602 aa).

Residues 74–76 carry the Nuclear localization signal motif; the sequence is KRK. Phosphoserine; by host is present on residues S80, S84, and S95. Residues 138 to 306 are DNA-binding region; that stretch reads QQSVSDTPVT…TNVNHQMLQE (169 aa). An SF3 helicase domain is found at 405–555; the sequence is VEFIPFMVKL…LPIRNGTPVY (151 aa). 431 to 438 contributes to the ATP binding site; the sequence is GPPNSGKS. K512 participates in a covalent cross-link: Glycyl lysine isopeptide (Lys-Gly) (interchain with G-Cter in SUMO). Positions 577-602 are disordered; it reads DPEDEGDDGGSQPALRLHTGGTSQSL.

The protein belongs to the papillomaviridae E1 protein family. In terms of assembly, can form hexamers. Interacts with E2 protein; this interaction increases E1 DNA binding specificity. Interacts with host DNA polymerase subunit POLA2. Interacts with host single stranded DNA-binding protein RPA1. Interacts with host TOP1; this interaction stimulates the enzymatic activity of TOP1. Phosphorylated. In terms of processing, sumoylated.

Its subcellular location is the host nucleus. The catalysed reaction is Couples ATP hydrolysis with the unwinding of duplex DNA by translocating in the 3'-5' direction.. The enzyme catalyses ATP + H2O = ADP + phosphate + H(+). ATP-dependent DNA 3'-5' helicase required for initiation of viral DNA replication. It forms a complex with the viral E2 protein. The E1-E2 complex binds to the replication origin which contains binding sites for both proteins. During the initial step, a dimer of E1 interacts with a dimer of protein E2 leading to a complex that binds the viral origin of replication with high specificity. Then, a second dimer of E1 displaces the E2 dimer in an ATP-dependent manner to form the E1 tetramer. Following this, two E1 monomers are added to each half of the site, which results in the formation of two E1 trimers on the viral ori. Subsequently, two hexamers will be created. The double hexamer acts as a bi-directional helicase machinery and unwinds the viral DNA and then recruits the host DNA polymerase to start replication. In Sylvilagus floridanus (Cottontail rabbit), this protein is Replication protein E1.